Reading from the N-terminus, the 253-residue chain is Phosphate import ATP-binding protein PstB (253 aa).

Residues 1–249 (MKLMDVRVSG…PRHELTKKFL (249 aa)) enclose the ABC transporter domain. 38–45 (GPSGSGKS) lines the ATP pocket.

This sequence belongs to the ABC transporter superfamily. Phosphate importer (TC 3.A.1.7) family. In terms of assembly, the complex is composed of two ATP-binding proteins (PstB), two transmembrane proteins (PstC and PstA) and a solute-binding protein (PstS).

Its subcellular location is the cell membrane. It catalyses the reaction phosphate(out) + ATP + H2O = ADP + 2 phosphate(in) + H(+). Its function is as follows. Part of the ABC transporter complex PstSACB involved in phosphate import. Responsible for energy coupling to the transport system. The chain is Phosphate import ATP-binding protein PstB from Aeropyrum pernix (strain ATCC 700893 / DSM 11879 / JCM 9820 / NBRC 100138 / K1).